The sequence spans 462 residues: Bifunctional protein HldE (462 aa).

The segment at 1–309 (MKPRILVLGD…EYERSIRKAP (309 aa)) is ribokinase. 186–189 (NKKE) provides a ligand contact to ATP. The active site involves Asp-254. A cytidylyltransferase region spans residues 336–462 (FTNGCFDILH…TAIVERMRSC (127 aa)).

This sequence in the N-terminal section; belongs to the carbohydrate kinase PfkB family. The protein in the C-terminal section; belongs to the cytidylyltransferase family. In terms of assembly, homodimer.

It carries out the reaction D-glycero-beta-D-manno-heptose 7-phosphate + ATP = D-glycero-beta-D-manno-heptose 1,7-bisphosphate + ADP + H(+). The enzyme catalyses D-glycero-beta-D-manno-heptose 1-phosphate + ATP + H(+) = ADP-D-glycero-beta-D-manno-heptose + diphosphate. It participates in nucleotide-sugar biosynthesis; ADP-L-glycero-beta-D-manno-heptose biosynthesis; ADP-L-glycero-beta-D-manno-heptose from D-glycero-beta-D-manno-heptose 7-phosphate: step 1/4. Its pathway is nucleotide-sugar biosynthesis; ADP-L-glycero-beta-D-manno-heptose biosynthesis; ADP-L-glycero-beta-D-manno-heptose from D-glycero-beta-D-manno-heptose 7-phosphate: step 3/4. Functionally, catalyzes the phosphorylation of D-glycero-D-manno-heptose 7-phosphate at the C-1 position to selectively form D-glycero-beta-D-manno-heptose-1,7-bisphosphate. In terms of biological role, catalyzes the ADP transfer from ATP to D-glycero-beta-D-manno-heptose 1-phosphate, yielding ADP-D-glycero-beta-D-manno-heptose. The sequence is that of Bifunctional protein HldE from Nitratiruptor sp. (strain SB155-2).